We begin with the raw amino-acid sequence, 151 residues long: Cell division control protein 2 homolog 2 (151 aa).

The Protein kinase domain maps to 1–151 (ALKEIRMDNE…IMQTLQIESL (151 aa)). ATP is bound at residue Lys3. Residue Asp113 is the Proton acceptor of the active site.

Belongs to the protein kinase superfamily. CMGC Ser/Thr protein kinase family. CDC2/CDKX subfamily.

The enzyme catalyses L-seryl-[protein] + ATP = O-phospho-L-seryl-[protein] + ADP + H(+). It catalyses the reaction L-threonyl-[protein] + ATP = O-phospho-L-threonyl-[protein] + ADP + H(+). The catalysed reaction is [DNA-directed RNA polymerase] + ATP = phospho-[DNA-directed RNA polymerase] + ADP + H(+). This Pisum sativum (Garden pea) protein is Cell division control protein 2 homolog 2.